We begin with the raw amino-acid sequence, 217 residues long: Probable transaldolase (217 aa).

Lysine 83 functions as the Schiff-base intermediate with substrate in the catalytic mechanism.

The protein belongs to the transaldolase family. Type 3B subfamily.

The protein localises to the cytoplasm. The enzyme catalyses D-sedoheptulose 7-phosphate + D-glyceraldehyde 3-phosphate = D-erythrose 4-phosphate + beta-D-fructose 6-phosphate. The protein operates within carbohydrate degradation; pentose phosphate pathway; D-glyceraldehyde 3-phosphate and beta-D-fructose 6-phosphate from D-ribose 5-phosphate and D-xylulose 5-phosphate (non-oxidative stage): step 2/3. Functionally, transaldolase is important for the balance of metabolites in the pentose-phosphate pathway. In Maricaulis maris (strain MCS10) (Caulobacter maris), this protein is Probable transaldolase.